The sequence spans 652 residues: Iron-regulated outer membrane virulence protein (652 aa).

The N-terminal stretch at 1–25 is a signal peptide; that stretch reads MSRFNPSPVSLSVTLGLMFSASAFA. The TonB box motif lies at 33-40; the sequence is ETMVVTAA. The 118-residue stretch at 45-162 folds into the TBDR plug domain; it reads VIQNAPASIS…IGGVINIITR (118 aa). The region spanning 167–652 is the TBDR beta-barrel domain; it reads QWSGNVQLST…RYWLGLDIAF (486 aa). The TonB C-terminal box motif lies at 635–652; sequence YGYVEDGRRYWLGLDIAF.

This sequence belongs to the TonB-dependent receptor family.

The protein resides in the cell outer membrane. Its function is as follows. Involved in the initial step of iron uptake by binding ferric vibriobactin, an iron chelatin siderophore that allows V.cholerae to extract iron from the environment. This is Iron-regulated outer membrane virulence protein (irgA) from Vibrio cholerae serotype O1 (strain ATCC 39315 / El Tor Inaba N16961).